A 199-amino-acid chain; its full sequence is Adenosylcobinamide-GDP ribazoletransferase (199 aa).

Helical transmembrane passes span 2–22 (LAGG…VFAV) and 61–81 (IAAV…VAAL).

Belongs to the CobS family. Requires Mg(2+) as cofactor.

The protein localises to the cell membrane. It carries out the reaction alpha-ribazole + adenosylcob(III)inamide-GDP = adenosylcob(III)alamin + GMP + H(+). The enzyme catalyses alpha-ribazole 5'-phosphate + adenosylcob(III)inamide-GDP = adenosylcob(III)alamin 5'-phosphate + GMP + H(+). Its pathway is cofactor biosynthesis; adenosylcobalamin biosynthesis; adenosylcobalamin from cob(II)yrinate a,c-diamide: step 7/7. Functionally, joins adenosylcobinamide-GDP and alpha-ribazole to generate adenosylcobalamin (Ado-cobalamin). Also synthesizes adenosylcobalamin 5'-phosphate from adenosylcobinamide-GDP and alpha-ribazole 5'-phosphate. The sequence is that of Adenosylcobinamide-GDP ribazoletransferase from Halobacterium salinarum (strain ATCC 700922 / JCM 11081 / NRC-1) (Halobacterium halobium).